A 471-amino-acid polypeptide reads, in one-letter code: UDP-N-acetylmuramate--L-alanine ligase (471 aa).

122-128 (GTHGKTT) serves as a coordination point for ATP.

The protein belongs to the MurCDEF family.

Its subcellular location is the cytoplasm. It catalyses the reaction UDP-N-acetyl-alpha-D-muramate + L-alanine + ATP = UDP-N-acetyl-alpha-D-muramoyl-L-alanine + ADP + phosphate + H(+). It participates in cell wall biogenesis; peptidoglycan biosynthesis. Its function is as follows. Cell wall formation. This is UDP-N-acetylmuramate--L-alanine ligase from Cutibacterium acnes (strain DSM 16379 / KPA171202) (Propionibacterium acnes).